Reading from the N-terminus, the 412-residue chain is uncharacterized protein (412 aa).

Residue His49 participates in Zn(2+) binding. The Proton acceptor role is filled by Glu52. Zn(2+) contacts are provided by His53 and Glu129.

The protein belongs to the peptidase M16 family. The cofactor is Zn(2+).

This is an uncharacterized protein from Rickettsia felis (strain ATCC VR-1525 / URRWXCal2) (Rickettsia azadi).